A 436-amino-acid chain; its full sequence is Eukaryotic translation initiation factor 4B (436 aa).

Residues 56–98 (AKNNSNNTRSGGFGGSFGGRSRLDPALGGGSSDRREEYPVPDA) form a disordered region. Ser65 and Ser71 each carry phosphoserine. In terms of domain architecture, RRM spans 101-183 (YRAVINNIPW…RTVYVSVAAP (83 aa)). A disordered region spans residues 185 to 406 (RGGGADVDWS…EKQNGDAKEN (222 aa)). One copy of the 1; approximate repeat lies at 190–210 (DVDWSSARGSNFQGDGREDAP). The tract at residues 190-350 (DVDWSSARGS…DWGAARGAQF (161 aa)) is 7 X approximate tandem repeats. 5 repeat units span residues 211-232 (DLDW…REEV), 233-258 (DIDW…REEV), 259-284 (DIDW…REEP), 285-310 (DIDW…REEP), and 311-340 (DIDW…EPAL). Positions 329 to 338 (PRREREKEEP) are enriched in basic and acidic residues. Residues 341 to 350 (DWGAARGAQF) form a 7; truncated repeat. Composition is skewed to basic and acidic residues over residues 359–376 (TYKD…EQPK) and 397–406 (EKQNGDAKEN).

Functionally, involved in translation initiation. May be the homolog of mammalian eIF4B and be part of an RNA helicase. STM1/TIF3 is a non-essential gene. This Saccharomyces cerevisiae (strain ATCC 204508 / S288c) (Baker's yeast) protein is Eukaryotic translation initiation factor 4B (TIF3).